We begin with the raw amino-acid sequence, 199 residues long: Holliday junction branch migration complex subunit RuvA (199 aa).

A domain I region spans residues 1–65; it reads MIGWLHGQII…EDALLLYGFL (65 aa). Residues 66 to 144 are domain II; it reads DKEERSLFRS…QFDGSVSDTF (79 aa). The flexible linker stretch occupies residues 144–148; the sequence is FQKQA. The domain III stretch occupies residues 149-199; that stretch reads GSTHSQQEAISALEALGYKPQEAWKVVNKIDNGNKSCEQLIREALQILSSR.

This sequence belongs to the RuvA family. Homotetramer. Forms an RuvA(8)-RuvB(12)-Holliday junction (HJ) complex. HJ DNA is sandwiched between 2 RuvA tetramers; dsDNA enters through RuvA and exits via RuvB. An RuvB hexamer assembles on each DNA strand where it exits the tetramer. Each RuvB hexamer is contacted by two RuvA subunits (via domain III) on 2 adjacent RuvB subunits; this complex drives branch migration. In the full resolvosome a probable DNA-RuvA(4)-RuvB(12)-RuvC(2) complex forms which resolves the HJ.

It is found in the cytoplasm. In terms of biological role, the RuvA-RuvB-RuvC complex processes Holliday junction (HJ) DNA during genetic recombination and DNA repair, while the RuvA-RuvB complex plays an important role in the rescue of blocked DNA replication forks via replication fork reversal (RFR). RuvA specifically binds to HJ cruciform DNA, conferring on it an open structure. The RuvB hexamer acts as an ATP-dependent pump, pulling dsDNA into and through the RuvAB complex. HJ branch migration allows RuvC to scan DNA until it finds its consensus sequence, where it cleaves and resolves the cruciform DNA. This is Holliday junction branch migration complex subunit RuvA from Legionella pneumophila (strain Paris).